A 331-amino-acid polypeptide reads, in one-letter code: Homoserine O-succinyltransferase (331 aa).

Cysteine 141 acts as the Acyl-thioester intermediate in catalysis. Substrate is bound by residues lysine 162 and serine 190. Residue histidine 233 is the Proton acceptor of the active site. Glutamate 235 is a catalytic residue. Arginine 247 provides a ligand contact to substrate.

The protein belongs to the MetA family.

It localises to the cytoplasm. The catalysed reaction is L-homoserine + succinyl-CoA = O-succinyl-L-homoserine + CoA. It participates in amino-acid biosynthesis; L-methionine biosynthesis via de novo pathway; O-succinyl-L-homoserine from L-homoserine: step 1/1. Its function is as follows. Transfers a succinyl group from succinyl-CoA to L-homoserine, forming succinyl-L-homoserine. The chain is Homoserine O-succinyltransferase from Methylorubrum extorquens (strain DSM 6343 / CIP 106787 / DM4) (Methylobacterium extorquens).